The chain runs to 281 residues: Foldase protein PrsA (281 aa).

The N-terminal stretch at 1-18 is a signal peptide; it reads MKKWMMAAAVVSLMALSA. C19 carries the N-palmitoyl cysteine lipid modification. C19 carries the S-diacylglycerol cysteine lipid modification. The 91-residue stretch at 133–223 folds into the PpiC domain; sequence KPKIRASHIL…YGYHIIKVTD (91 aa).

This sequence belongs to the PrsA family.

It localises to the cell membrane. The catalysed reaction is [protein]-peptidylproline (omega=180) = [protein]-peptidylproline (omega=0). Its function is as follows. Plays a major role in protein secretion by helping the post-translocational extracellular folding of several secreted proteins. This chain is Foldase protein PrsA, found in Geobacillus kaustophilus (strain HTA426).